The chain runs to 503 residues: Probable cytosol aminopeptidase (503 aa).

Mn(2+) is bound by residues Lys270 and Asp275. The active site involves Lys282. Residues Asp293, Asp352, and Glu354 each contribute to the Mn(2+) site. Arg356 is an active-site residue.

The protein belongs to the peptidase M17 family. Mn(2+) is required as a cofactor.

The protein resides in the cytoplasm. It carries out the reaction Release of an N-terminal amino acid, Xaa-|-Yaa-, in which Xaa is preferably Leu, but may be other amino acids including Pro although not Arg or Lys, and Yaa may be Pro. Amino acid amides and methyl esters are also readily hydrolyzed, but rates on arylamides are exceedingly low.. It catalyses the reaction Release of an N-terminal amino acid, preferentially leucine, but not glutamic or aspartic acids.. Its function is as follows. Presumably involved in the processing and regular turnover of intracellular proteins. Catalyzes the removal of unsubstituted N-terminal amino acids from various peptides. This Enterobacter sp. (strain 638) protein is Probable cytosol aminopeptidase.